We begin with the raw amino-acid sequence, 307 residues long: Nucleotide-binding protein Acid345_3782 (307 aa).

ATP is bound at residue 31–38; it reads GLSGSGKA. 81–84 provides a ligand contact to GTP; that stretch reads DIRE.

The protein belongs to the RapZ-like family.

Its function is as follows. Displays ATPase and GTPase activities. The sequence is that of Nucleotide-binding protein Acid345_3782 from Koribacter versatilis (strain Ellin345).